A 235-amino-acid chain; its full sequence is Thaumatin I (235 aa).

The N-terminal stretch at 1 to 22 (MAATTCFFFLFPFLLLLTLSRA) is a signal peptide. Cystine bridges form between C31-C226, C78-C88, C93-C99, C143-C215, C148-C199, C156-C167, C171-C180, and C181-C186. A propeptide spans 230 to 235 (LELEDE) (removed in mature form).

The protein belongs to the thaumatin family.

The protein resides in the cytoplasmic vesicle. Its function is as follows. Taste-modifying protein; intensely sweet-tasting. It is 100000 times sweeter than sucrose on a molar basis. The polypeptide is Thaumatin I (Thaumatococcus daniellii (Katemfe)).